Here is a 188-residue protein sequence, read N- to C-terminus: HTH-type transcriptional regulator LmrA (188 aa).

An HTH tetR-type domain is found at 4–64 (GDSREKILSA…IEAVNEMKEY (61 aa)). The segment at residues 27-46 (GLNQIIKESGAPKGSLYYHF) is a DNA-binding region (H-T-H motif).

Acts as a repressor of the lincomycin-resistance (lmrAB) and yxaGH operons. The polypeptide is HTH-type transcriptional regulator LmrA (lmrA) (Bacillus subtilis (strain 168)).